We begin with the raw amino-acid sequence, 136 residues long: ATP synthase epsilon chain, chloroplastic (136 aa).

Belongs to the ATPase epsilon chain family. As to quaternary structure, F-type ATPases have 2 components, CF(1) - the catalytic core - and CF(0) - the membrane proton channel. CF(1) has five subunits: alpha(3), beta(3), gamma(1), delta(1), epsilon(1). CF(0) has three main subunits: a, b and c.

The protein localises to the plastid. It is found in the chloroplast thylakoid membrane. Produces ATP from ADP in the presence of a proton gradient across the membrane. The sequence is that of ATP synthase epsilon chain, chloroplastic from Tetradesmus obliquus (Green alga).